The primary structure comprises 592 residues: Neurogenic locus notch homolog protein (592 aa).

An N-terminal signal peptide occupies residues 1-19; the sequence is MIFVLTLVALCTAIHCPDG. EGF-like domains follow at residues 64–104, 106–146, 267–307, 353–387, 453–488, and 546–588; these read YPSI…DYQV, VPEA…EKCT, YPEA…NTCI, NSQTNPPQLCHSAGSCDFDTGVCSCNPTNSGPTCE, VPNSCVTASLIICSNRGTCTDGVCKCNEGYSGALCE, and IDGE…KHCN. Disulfide bonds link Cys68–Cys82, Cys76–Cys92, Cys110–Cys123, Cys117–Cys134, Cys136–Cys145, Cys271–Cys284, Cys278–Cys293, Cys295–Cys306, Cys362–Cys375, Cys377–Cys386, Cys457–Cys471, Cys478–Cys487, Cys550–Cys565, Cys555–Cys576, and Cys578–Cys587. N-linked (GlcNAc...) asparagine glycosylation is present at Asn552.

The protein belongs to the NOTCH family. In terms of assembly, interacts with EB1.

Its subcellular location is the cell projection. The protein localises to the cilium. It localises to the flagellum. The protein resides in the cytoplasm. It is found in the cytoskeleton. Its subcellular location is the flagellum axoneme. This chain is Neurogenic locus notch homolog protein, found in Giardia intestinalis (strain ATCC 50803 / WB clone C6) (Giardia lamblia).